We begin with the raw amino-acid sequence, 249 residues long: MAARRSQRRRGRRGEPGTALLVPLALGLGLALACLGLLLAVVSLGSRASLSAQEPAQEELVAEEDQDPSELNPQTEESQDPAPFLNRLVRPRRSAPKGRKTRARRAIAAHYEVHPRPGQDGAQAGVDGTVSGWEEARINSSSPLRYNRQIGEFIVTRAGLYYLYCQVHFDEGKAVYLKLDLLVDGVLALRCLEEFSATAASSLGPQLRLCQVSGLLALRPGSSLRIRTLPWAHLKAAPFLTYFGLFQVH.

Residues 1-21 (MAARRSQRRRGRRGEPGTALL) lie on the Cytoplasmic side of the membrane. The helical; Signal-anchor for type II membrane protein transmembrane segment at 22–42 (VPLALGLGLALACLGLLLAVV) threads the bilayer. Residues 43 to 249 (SLGSRASLSA…LTYFGLFQVH (207 aa)) lie on the Extracellular side of the membrane. A disordered region spans residues 55–85 (PAQEELVAEEDQDPSELNPQTEESQDPAPFL). A compositionally biased stretch (acidic residues) spans 56 to 68 (AQEELVAEEDQDP). Residues 107–248 (IAAHYEVHPR…FLTYFGLFQV (142 aa)) enclose the THD domain. An N-linked (GlcNAc...) asparagine glycan is attached at Asn139. An intrachain disulfide couples Cys191 to Cys210.

This sequence belongs to the tumor necrosis factor family. Homotrimer. Interacts with the angiogenic factor AGGF1/VG5Q. The soluble form derives from the membrane form by proteolytic processing. Highly expressed in adult heart, pancreas, skeletal muscle, brain, colon, small intestine, lung, ovary, prostate, spleen, lymph node, appendix and peripheral blood lymphocytes. Low expression in kidney, testis, liver, placenta, thymus and bone marrow. Also detected in fetal kidney, liver, lung and brain.

Its subcellular location is the cell membrane. The protein localises to the secreted. Its function is as follows. Binds to FN14 and possibly also to TNRFSF12/APO3. Weak inducer of apoptosis in some cell types. Mediates NF-kappa-B activation. Promotes angiogenesis and the proliferation of endothelial cells. Also involved in induction of inflammatory cytokines. Promotes IL8 secretion. The chain is Tumor necrosis factor ligand superfamily member 12 (TNFSF12) from Homo sapiens (Human).